The primary structure comprises 417 residues: Squalene synthase (417 aa).

Residues Arg52 and Arg77 each contribute to the NADP(+) site. The Mg(2+) site is built by Asp80, Glu83, and Asp84. Arg218 lines the NADP(+) pocket. A helical membrane pass occupies residues 284–304 (SVFNFCAIPQVMAIATLAACY). Residues Lys315 and Arg317 each coordinate NADP(+). Residues 384–404 (PIYLSFVMLLAALSWQYLTTL) form a helical membrane-spanning segment.

The protein belongs to the phytoene/squalene synthase family. Mg(2+) serves as cofactor. As to expression, widely expressed.

The protein resides in the endoplasmic reticulum membrane. It catalyses the reaction 2 (2E,6E)-farnesyl diphosphate + NADPH + H(+) = squalene + 2 diphosphate + NADP(+). The catalysed reaction is 2 (2E,6E)-farnesyl diphosphate + NADH + H(+) = squalene + 2 diphosphate + NAD(+). The enzyme catalyses 2 (2E,6E)-farnesyl diphosphate = presqualene diphosphate + diphosphate. It carries out the reaction presqualene diphosphate + NADH + H(+) = squalene + diphosphate + NAD(+). It catalyses the reaction presqualene diphosphate + NADPH + H(+) = squalene + diphosphate + NADP(+). Its pathway is terpene metabolism; lanosterol biosynthesis; lanosterol from farnesyl diphosphate: step 1/3. Functionally, catalyzes the condensation of 2 farnesyl pyrophosphate (FPP) moieties to form squalene. Proceeds in two distinct steps. In the first half-reaction, two molecules of FPP react to form the stable presqualene diphosphate intermediate (PSQPP), with concomitant release of a proton and a molecule of inorganic diphosphate. In the second half-reaction, PSQPP undergoes heterolysis, isomerization, and reduction with NADPH or NADH to form squalene. It is the first committed enzyme of the sterol biosynthesis pathway. The chain is Squalene synthase (FDFT1) from Homo sapiens (Human).